The sequence spans 165 residues: uncharacterized protein (165 aa).

This sequence belongs to the IIV-6 415R family.

This is an uncharacterized protein from Invertebrate iridescent virus 3 (IIV-3).